Here is a 155-residue protein sequence, read N- to C-terminus: Large ribosomal subunit protein eL24 (155 aa).

Residues 98-129 are compositionally biased toward basic and acidic residues; that stretch reads PEVRKAKRDDKAKADKEKKKADKAARKAEKAK. Positions 98-155 are disordered; the sequence is PEVRKAKRDDKAKADKEKKKADKAARKAEKAKLAAAQGSKVSKQQAKGAFQKVAATSR.

This sequence belongs to the eukaryotic ribosomal protein eL24 family.

The sequence is that of Large ribosomal subunit protein eL24 (RPL24) from Candida glabrata (strain ATCC 2001 / BCRC 20586 / JCM 3761 / NBRC 0622 / NRRL Y-65 / CBS 138) (Yeast).